Consider the following 210-residue polypeptide: MAEPSGRYQQLPCEEEPEAGPQVAADAPPPYSSIAADSAAFFDYKDDAAFPNPPSYNVATSLPSYDEAERTKTETSVPLVSGRDDDFVARDDFEDADQLRIGNDGIFMLTFFMAFLFNWIGFFLSFCLTTSAAGRYGAISGFGLSLIKWILIVRFSTYFPGYFDGQYWLWWVFLVLGFLLFLRGFINYAKIRKMADSFSTLPRTRVLFIY.

The interval 1–31 (MAEPSGRYQQLPCEEEPEAGPQVAADAPPPY) is disordered. Over 1-105 (MAEPSGRYQQ…ADQLRIGNDG (105 aa)) the chain is Cytoplasmic. 2 short sequence motifs (PPxY motif) span residues 30–33 (PYSS) and 53–56 (PPSY). The chain crosses the membrane as a helical span at residues 106–126 (IFMLTFFMAFLFNWIGFFLSF). Residues 127–132 (CLTTSA) lie on the Extracellular side of the membrane. The helical transmembrane segment at 133–153 (AGRYGAISGFGLSLIKWILIV) threads the bilayer. The Cytoplasmic segment spans residues 154–161 (RFSTYFPG). The chain crosses the membrane as a helical span at residues 162-182 (YFDGQYWLWWVFLVLGFLLFL). At 183-210 (RGFINYAKIRKMADSFSTLPRTRVLFIY) the chain is on the extracellular side.

The protein localises to the golgi apparatus membrane. May play a role in Golgi structure maintenance. The chain is NEDD4 family-interacting protein 1-like (ndfip1l) from Danio rerio (Zebrafish).